The chain runs to 243 residues: Uridylate kinase (243 aa).

An ATP-binding site is contributed by 15–18 (KLSG). The involved in allosteric activation by GTP stretch occupies residues 23–28 (GEEGFG). Residue Gly-57 coordinates UMP. Residues Gly-58 and Arg-62 each coordinate ATP. Residues Asp-77 and 138–145 (TGNPFCTT) each bind UMP. Thr-165, Tyr-171, and Asp-174 together coordinate ATP.

Belongs to the UMP kinase family. As to quaternary structure, homohexamer.

It is found in the cytoplasm. It carries out the reaction UMP + ATP = UDP + ADP. It functions in the pathway pyrimidine metabolism; CTP biosynthesis via de novo pathway; UDP from UMP (UMPK route): step 1/1. With respect to regulation, allosterically activated by GTP. Inhibited by UTP. Its function is as follows. Catalyzes the reversible phosphorylation of UMP to UDP. The sequence is that of Uridylate kinase from Shewanella denitrificans (strain OS217 / ATCC BAA-1090 / DSM 15013).